The primary structure comprises 413 residues: Protein cycle (413 aa).

The interval 1 to 43 (MEVQEFCENMEEIEDENYDEEKSARTSDENRKQNHSEIEKRRR) is disordered. Acidic residues predominate over residues 8-19 (ENMEEIEDENYD). Positions 20–41 (EEKSARTSDENRKQNHSEIEKR) are enriched in basic and acidic residues. A bHLH domain is found at 30–83 (NRKQNHSEIEKRRRDKMNTYINELSSMIPMCFAMQRKLDKLTVLRMAVQHLRGI). Positions 104–175 (DQELKMIILQ…EQLSSLEQCP (72 aa)) constitute a PAS 1 domain. A disordered region spans residues 219-242 (NQIKEESDTSSSSRSSTKRKSRLT). Residues 297–367 (PASLDNHPNI…ESHKMVMQVP (71 aa)) form the PAS 2 domain. A PAC domain is found at 372 to 413 (TQVYRFRCKDNSYIQLQSEWRAFKNPWTSEIDYIIAKNSVFL).

In terms of assembly, efficient DNA binding requires dimerization with another bHLH protein. Forms a heterodimer with Clock in order to activate PER and TIM transcription. In terms of tissue distribution, expressed in head and ovary.

Its subcellular location is the nucleus. In terms of biological role, putative transcription factor involved in the generation of biological rhythms. Activates cycling transcription of Period (PER) and Timeless (TIM) by binding to the E-box (5'-CACGTG-3') present in their promoters. In Drosophila melanogaster (Fruit fly), this protein is Protein cycle (cyc).